Reading from the N-terminus, the 152-residue chain is Large ribosomal subunit protein bL9 (152 aa).

This sequence belongs to the bacterial ribosomal protein bL9 family.

Functionally, binds to the 23S rRNA. In Mycobacterium sp. (strain JLS), this protein is Large ribosomal subunit protein bL9.